A 210-amino-acid polypeptide reads, in one-letter code: T-cell surface glycoprotein CD8 beta chain (210 aa).

A signal peptide spans 1–21 (MRPRLWLLLAAQLTVLHGNSV). Residues 22–132 (LQQTPAYIKV…ELTFGKGTQL (111 aa)) form the Ig-like V-type domain. The Extracellular portion of the chain corresponds to 22 to 170 (LQQTPAYIKV…ETQKGPLCSP (149 aa)). An intrachain disulfide couples C41 to C116. N102 carries N-linked (GlcNAc...) asparagine glycosylation. The chain crosses the membrane as a helical span at residues 171-191 (ITLGLLVAGVLVLLVSLGVAI). Over 192–210 (HLCCRRRRARLRFMKQFYK) the chain is Cytoplasmic. The residue at position 209 (Y209) is a Phosphotyrosine.

Forms disulfide-linked heterodimers with CD8A at the cell surface. Interacts with CD3D; this interaction couples TCR-CD3 with CD8. Interacts with LCK. Post-translationally, phosphorylated as a consequence of T-cell activation. In terms of processing, palmitoylated at the cytoplasmic tail and thereby targets the heterodimer CD8A/CD8B to lipid rafts unlike CD8A homodimers. In terms of tissue distribution, isoform 1, isoform 3, isoform 5, isoform 6, isoform 7 and isoform 8 are expressed in both thymus and peripheral CD8+ T-cells. Expression of isoform 1 is higher in thymus CD8+ T-cells than in peripheral CD8+ T-cells. Expression of isoform 6 is higher in peripheral CD8+ T-cells than in thymus CD8+ T-cells.

It localises to the cell membrane. It is found in the secreted. Integral membrane glycoprotein that plays an essential role in the immune response and serves multiple functions in responses against both external and internal offenses. In T-cells, functions primarily as a coreceptor for MHC class I molecule:peptide complex. The antigens presented by class I peptides are derived from cytosolic proteins while class II derived from extracellular proteins. Interacts simultaneously with the T-cell receptor (TCR) and the MHC class I proteins presented by antigen presenting cells (APCs). In turn, recruits the Src kinase LCK to the vicinity of the TCR-CD3 complex. A palmitoylation site in the cytoplasmic tail of CD8B chain contributes to partitioning of CD8 into the plasma membrane lipid rafts where signaling proteins are enriched. Once LCK recruited, it initiates different intracellular signaling pathways by phosphorylating various substrates ultimately leading to lymphokine production, motility, adhesion and activation of cytotoxic T-lymphocytes (CTLs). Additionally, plays a critical role in thymic selection of CD8+ T-cells. This chain is T-cell surface glycoprotein CD8 beta chain (CD8B), found in Homo sapiens (Human).